The following is a 358-amino-acid chain: Protein PXR1 (358 aa).

Disordered regions lie at residues 1–26 (MGLA…NNTS) and 146–342 (EVKT…KSAT). Positions 11–26 (KISNDPQNTTWANNTS) are enriched in polar residues. The 55-residue stretch at 25-79 (TSRFGHRILTSQGWQPGDSLGASDAAHAAHYTVASQSHIRVLLKDDNLGLGAKRG) folds into the G-patch domain. 2 stretches are compositionally biased toward basic and acidic residues: residues 146-171 (EVKT…EDDR) and 199-217 (SMDL…SSKD). Residues 218-227 (KKGKKSKKDK) show a composition bias toward basic residues. The segment covering 287-299 (DVEDLSSESEDES) has biased composition (acidic residues). Over residues 300–315 (TPSASRPATGTSTPTV) the composition is skewed to polar residues. Positions 328–339 (HSVRQKWIRSKK) are enriched in basic residues.

This sequence belongs to the PINX1 family.

Its subcellular location is the nucleus. It is found in the nucleolus. Involved in rRNA-processing at A0, A1 and A2 sites and negatively regulates telomerase. This Phaeosphaeria nodorum (strain SN15 / ATCC MYA-4574 / FGSC 10173) (Glume blotch fungus) protein is Protein PXR1 (PXR1).